The primary structure comprises 541 residues: Zinc finger protein 513 (541 aa).

Positions 1–118 (MPRRKQSHPQ…GEARGERPGP (118 aa)) are disordered. The segment covering 44–55 (LEFEEEEEEDEG) has biased composition (acidic residues). Phosphoserine is present on residues S85 and S96. A compositionally biased stretch (basic and acidic residues) spans 103–115 (EPARGPGEARGER). 8 C2H2-type zinc fingers span residues 150–172 (YSCR…MQTH), 178–200 (FRCG…TRTH), 206–228 (YRCP…QRTH), 360–382 (FACS…MKTH), 388–410 (FRCA…QRVH), 416–438 (YKCP…GRIH), 444–466 (FRCS…MLRH), and 472–494 (FRCA…QKVH). Residues 492–541 (KVHGHGGAGGPGLSAPEGWAPPHSPPSVLSTRGPAALGATGSRALHSDSP) are disordered.

Belongs to the krueppel C2H2-type zinc-finger protein family. Binds DNA. Can associate with the proximal promoter regions of PAX6 and SP4, and their known targets including ARR3, RHO, OPN1MW2 and OPN1SW. As to expression, widely expressed. In the eye, expression is greatest in the retina and least in the lens and cornea.

The protein localises to the nucleus. Transcriptional regulator that plays a role in retinal development and maintenance. The chain is Zinc finger protein 513 (Znf513) from Mus musculus (Mouse).